Reading from the N-terminus, the 390-residue chain is DNA replication and repair protein RecF (390 aa).

30 to 37 (GDNAQGKS) lines the ATP pocket.

Belongs to the RecF family.

It is found in the cytoplasm. Functionally, the RecF protein is involved in DNA metabolism; it is required for DNA replication and normal SOS inducibility. RecF binds preferentially to single-stranded, linear DNA. It also seems to bind ATP. The protein is DNA replication and repair protein RecF of Trichodesmium erythraeum (strain IMS101).